The chain runs to 107 residues: Replication initiation control protein YabA (107 aa).

The Zn(2+) site is built by His-81, Cys-83, Cys-97, and Cys-100.

It belongs to the YabA family. Homotetramer. Interacts with both DnaA and DnaN, acting as a bridge between these two proteins. Requires Zn(2+) as cofactor.

The protein resides in the cytoplasm. It localises to the nucleoid. Involved in control of chromosome replication initiation. Inhibits the cooperative binding of DnaA to the oriC region, thus negatively regulating initiation of chromosome replication. Inhibits the ability of DnaA-ATP to form a helix on DNA; does not disassemble preformed DnaA-DNA helices. Decreases the residence time of DnaA on the chromosome at its binding sites (oriC, replication forks and promoter-binding sites). Tethers DnaA to the replication machinery via the DNA polymerase beta sliding clamp subunit (dnaN). Associates with oriC and other DnaA targets on the chromosome in a DnaA-dependent manner. The protein is Replication initiation control protein YabA of Streptococcus pyogenes serotype M1.